The following is a 335-amino-acid chain: Biotin synthase (335 aa).

In terms of domain architecture, Radical SAM core spans 50-279; sequence ADIQRAALLS…KARVRLSAGR (230 aa). 3 residues coordinate [4Fe-4S] cluster: cysteine 65, cysteine 69, and cysteine 72. [2Fe-2S] cluster-binding residues include cysteine 110, cysteine 142, cysteine 202, and arginine 274.

The protein belongs to the radical SAM superfamily. Biotin synthase family. In terms of assembly, homodimer. Requires [4Fe-4S] cluster as cofactor. The cofactor is [2Fe-2S] cluster.

The catalysed reaction is (4R,5S)-dethiobiotin + (sulfur carrier)-SH + 2 reduced [2Fe-2S]-[ferredoxin] + 2 S-adenosyl-L-methionine = (sulfur carrier)-H + biotin + 2 5'-deoxyadenosine + 2 L-methionine + 2 oxidized [2Fe-2S]-[ferredoxin]. It functions in the pathway cofactor biosynthesis; biotin biosynthesis; biotin from 7,8-diaminononanoate: step 2/2. Catalyzes the conversion of dethiobiotin (DTB) to biotin by the insertion of a sulfur atom into dethiobiotin via a radical-based mechanism. The sequence is that of Biotin synthase from Methylorubrum extorquens (strain CM4 / NCIMB 13688) (Methylobacterium extorquens).